Reading from the N-terminus, the 509-residue chain is Histidine ammonia-lyase (509 aa).

The 5-imidazolinone (Ala-Gly) cross-link spans 142–144 (ASG). Ser143 bears the 2,3-didehydroalanine (Ser) mark.

The protein belongs to the PAL/histidase family. Post-translationally, contains an active site 4-methylidene-imidazol-5-one (MIO), which is formed autocatalytically by cyclization and dehydration of residues Ala-Ser-Gly.

Its subcellular location is the cytoplasm. It carries out the reaction L-histidine = trans-urocanate + NH4(+). It functions in the pathway amino-acid degradation; L-histidine degradation into L-glutamate; N-formimidoyl-L-glutamate from L-histidine: step 1/3. In Pseudomonas aeruginosa (strain LESB58), this protein is Histidine ammonia-lyase.